The sequence spans 158 residues: MQLYVDLQIACSDPNDLPMPASFEKWIEAAILGGSESHREEAELTVRIVDQDEIMQLNHQYRNISKTTNVLAFPFQNPPGLTLPLLGDLIICKEVVESEAKLQGKSLTAHWAHMSIHSTLHLLGYDHIEQAEAVEMESLETKLLTELGFTDPYLSEKE.

Zn(2+)-binding residues include His-117, His-121, and His-127.

The protein belongs to the endoribonuclease YbeY family. The cofactor is Zn(2+).

It localises to the cytoplasm. Single strand-specific metallo-endoribonuclease involved in late-stage 70S ribosome quality control and in maturation of the 3' terminus of the 16S rRNA. The sequence is that of Endoribonuclease YbeY from Psychromonas ingrahamii (strain DSM 17664 / CCUG 51855 / 37).